The chain runs to 657 residues: Tyramine beta-hydroxylase (657 aa).

Residues 77-97 traverse the membrane as a helical segment; the sequence is VALLFLLVAYCGGVVHAGEIV. In terms of domain architecture, DOMON spans 103–214; that stretch reads TNVTVKWHTD…GTTQFYIAAS (112 aa). Residues asparagine 104 and asparagine 143 are each glycosylated (N-linked (GlcNAc...) asparagine). Tyrosine 278 is a catalytic residue. 2 disulfide bridges follow: cysteine 280–cysteine 330 and cysteine 319–cysteine 342. Cu(2+) contacts are provided by histidine 312 and histidine 313. 4 residues coordinate Cu(2+): histidine 380, histidine 458, histidine 460, and methionine 533. 3 disulfide bridges follow: cysteine 437-cysteine 549, cysteine 441-cysteine 606, and cysteine 512-cysteine 534. Histidine 458 is an active-site residue. Asparagine 555 carries N-linked (GlcNAc...) asparagine glycosylation.

Belongs to the copper type II ascorbate-dependent monooxygenase family. It depends on Cu(2+) as a cofactor. In terms of tissue distribution, present in synaptic regions of RIC interneurons. Present in gonadal sheath cells of hermaphrodites (at protein level).

It localises to the membrane. It carries out the reaction tyramine + L-ascorbate + O2 = (R)-octopamine + L-dehydroascorbate + H2O. Required for the conversion of tyramine to octopamine, a precursor of octapamine but probably itself a neurotransmitter. Involved in the regulation of egg laying, which is inhibited by tyramine. Due to its involvement in octopamine biosynthesis, also required for crtc-1-dependent regulation of AMPK-mediated longevity. This Caenorhabditis elegans protein is Tyramine beta-hydroxylase.